The primary structure comprises 200 residues: MLKYPDYISKLISFLKKLPGIGFKSAEKIAFELLEWDPSQIEAMALALQEFSTSHATCSNCFCLKISQTSPCNFCSESRDSSSLCIVATPKDVFALEKSKIFKGHYFVLGNLLSPITGKHLSLEKLAILKQRIEACSPKEMIIALDATLEGDATALFLKQEFSYLPIKISRLALGMPVGLSFDFVDANTLARAFSGRNCF.

A C4-type zinc finger spans residues 58 to 75 (CSNCFCLKISQTSPCNFC). The region spanning 82–177 (SSLCIVATPK…KISRLALGMP (96 aa)) is the Toprim domain.

It belongs to the RecR family.

Functionally, may play a role in DNA repair. It seems to be involved in an RecBC-independent recombinational process of DNA repair. It may act with RecF and RecO. The sequence is that of Recombination protein RecR from Chlamydia trachomatis serovar L2 (strain ATCC VR-902B / DSM 19102 / 434/Bu).